A 180-amino-acid chain; its full sequence is Ribosome maturation factor RimM (180 aa).

Residues Gly103–Leu176 enclose the PRC barrel domain.

This sequence belongs to the RimM family. In terms of assembly, binds ribosomal protein uS19.

It is found in the cytoplasm. In terms of biological role, an accessory protein needed during the final step in the assembly of 30S ribosomal subunit, possibly for assembly of the head region. Essential for efficient processing of 16S rRNA. May be needed both before and after RbfA during the maturation of 16S rRNA. It has affinity for free ribosomal 30S subunits but not for 70S ribosomes. In Frankia alni (strain DSM 45986 / CECT 9034 / ACN14a), this protein is Ribosome maturation factor RimM.